Here is a 454-residue protein sequence, read N- to C-terminus: tRNA modification GTPase MnmE (454 aa).

Positions 23, 80, and 120 each coordinate (6S)-5-formyl-5,6,7,8-tetrahydrofolate. The region spanning 216-377 (GMKVVIAGRP…LRNHLKQSMG (162 aa)) is the TrmE-type G domain. Asparagine 226 contacts K(+). Residues 226–231 (NAGKSS), 245–251 (TDIAGTT), 270–273 (DTAG), 335–338 (NKAD), and 358–360 (SAR) each bind GTP. Serine 230 lines the Mg(2+) pocket. Positions 245, 247, and 250 each coordinate K(+). Threonine 251 contacts Mg(2+). (6S)-5-formyl-5,6,7,8-tetrahydrofolate is bound at residue lysine 454.

This sequence belongs to the TRAFAC class TrmE-Era-EngA-EngB-Septin-like GTPase superfamily. TrmE GTPase family. As to quaternary structure, homodimer. Heterotetramer of two MnmE and two MnmG subunits. It depends on K(+) as a cofactor.

It localises to the cytoplasm. In terms of biological role, exhibits a very high intrinsic GTPase hydrolysis rate. Involved in the addition of a carboxymethylaminomethyl (cmnm) group at the wobble position (U34) of certain tRNAs, forming tRNA-cmnm(5)s(2)U34. In Yersinia enterocolitica serotype O:8 / biotype 1B (strain NCTC 13174 / 8081), this protein is tRNA modification GTPase MnmE.